We begin with the raw amino-acid sequence, 93 residues long: YcgL domain-containing protein Ssed_2518 (93 aa).

One can recognise a YcgL domain in the interval 1 to 85; sequence MICAVYKSRR…PKVNLLEQHK (85 aa).

The chain is YcgL domain-containing protein Ssed_2518 from Shewanella sediminis (strain HAW-EB3).